We begin with the raw amino-acid sequence, 408 residues long: Aminoacylase-1 (408 aa).

His-76 provides a ligand contact to Zn(2+). The active site involves Asp-78. Asp-109 contacts Zn(2+). The Proton acceptor role is filled by Glu-143. Glu-144, Glu-172, and His-379 together coordinate Zn(2+).

Belongs to the peptidase M20A family. In terms of assembly, homodimer. Zn(2+) serves as cofactor.

The protein resides in the cytoplasm. It carries out the reaction an N-acyl-L-amino acid + H2O = an L-alpha-amino acid + a carboxylate. The catalysed reaction is an N-acetyl-L-cysteine-S-conjugate + H2O = an S-substituted L-cysteine + acetate. Functionally, involved in the hydrolysis of N-acylated or N-acetylated amino acids (except L-aspartate). The chain is Aminoacylase-1 (acy1) from Dictyostelium discoideum (Social amoeba).